The sequence spans 223 residues: Ribonuclease T (223 aa).

The region spanning 20–195 (VVIDVETAGF…YDTERTAELF (176 aa)) is the Exonuclease domain. Mg(2+) is bound by residues aspartate 23, glutamate 25, histidine 182, and aspartate 187. The active-site Proton donor/acceptor is the histidine 182.

Belongs to the RNase T family. In terms of assembly, homodimer. The cofactor is Mg(2+).

Functionally, trims short 3' overhangs of a variety of RNA species, leaving a one or two nucleotide 3' overhang. Responsible for the end-turnover of tRNA: specifically removes the terminal AMP residue from uncharged tRNA (tRNA-C-C-A). Also appears to be involved in tRNA biosynthesis. This chain is Ribonuclease T, found in Photobacterium profundum (strain SS9).